The chain runs to 624 residues: ATP-dependent zinc metalloprotease FtsH (624 aa).

Residues 1 to 7 are Cytoplasmic-facing; the sequence is MPRAPFS. The chain crosses the membrane as a helical span at residues 8–28; sequence LLALVLGLAFLAWAFSLAGTV. At 29–103 the chain is on the periplasmic side; it reads GAPSGTVNYT…VRVEPPQGQN (75 aa). The helical transmembrane segment at 104-124 threads the bilayer; the sequence is ALGFLWPLLLVGLLIGALYYF. At 125-624 the chain is on the cytoplasmic side; that stretch reads SRNGRAGPSD…VKPGGALGGA (500 aa). Residues Ala159, 199–203, and His204 each bind ATP; that span reads GVGKT. His418 serves as a coordination point for Zn(2+). The active site involves Glu419. Residues His422 and Asp493 each contribute to the Zn(2+) site. The interval 595 to 624 is disordered; that stretch reads PLEAPEEAREEREPPRVVPKVKPGGALGGA. The segment covering 600–609 has biased composition (basic and acidic residues); sequence EEAREEREPP.

In the central section; belongs to the AAA ATPase family. This sequence in the C-terminal section; belongs to the peptidase M41 family. As to quaternary structure, the isolated soluble domain (residues 126-624) forms a stable hexamer in which the AAA+ domains (residues 126-400) are alternatively open or closed. Zn(2+) serves as cofactor.

The protein resides in the cell inner membrane. Its activity is regulated as follows. The proteolytic activity is dependent on ATP, both the ATPase and protease activities are inhibited by ADP. In terms of biological role, acts as a processive, ATP-dependent zinc metallopeptidase for both cytoplasmic and membrane proteins. Plays a role in the quality control of integral membrane proteins. Degrades preferentially unfolded substrates in a processive, ATP-dependent manner, usually after hydrophobic residues. The sequence is that of ATP-dependent zinc metalloprotease FtsH from Thermus thermophilus (strain ATCC 27634 / DSM 579 / HB8).